Reading from the N-terminus, the 543-residue chain is Phosphoribosylaminoimidazole carboxylase (543 aa).

The ATP-grasp domain occupies 110–297; it reads KEHLIKNGIA…QFEAHVRAIT (188 aa). 137 to 192 is an ATP binding site; it reads GAKYGFPYMLKSRTMAYDGRGNFVVKDKSYIPEALKVLDDRPLYAEKWAPFSKELA.

This sequence in the C-terminal section; belongs to the AIR carboxylase family. Class I subfamily.

The enzyme catalyses 5-amino-1-(5-phospho-D-ribosyl)imidazole-4-carboxylate + H(+) = 5-amino-1-(5-phospho-beta-D-ribosyl)imidazole + CO2. Its pathway is purine metabolism; IMP biosynthesis via de novo pathway; 5-amino-1-(5-phospho-D-ribosyl)imidazole-4-carboxylate from 5-amino-1-(5-phospho-D-ribosyl)imidazole (carboxylase route): step 1/1. The sequence is that of Phosphoribosylaminoimidazole carboxylase (ADE1) from Ogataea methanolica (Yeast).